We begin with the raw amino-acid sequence, 1003 residues long: Helicase-like transcription factor (1003 aa).

Omega-N-methylarginine is present on Arg-27. A DNA-binding region spans residues 38 to 287 (EFQDIIPPDD…FSVKERPENV (250 aa)). Lys-112 is covalently cross-linked (Glycyl lysine isopeptide (Lys-Gly) (interchain with G-Cter in SUMO2)). Tyr-195 bears the Phosphotyrosine; by JAK2 mark. Residue Lys-211 forms a Glycyl lysine isopeptide (Lys-Gly) (interchain with G-Cter in SUMO2) linkage. 294–301 (DDMGLGKT) contributes to the ATP binding site. The interval 317–373 (PLLSKRGKKNHPGKEYKDETIKRRGSNMDKKEDGHSESSTCGEEPSISGTPEKSSCT) is disordered. Residues 328-352 (PGKEYKDETIKRRGSNMDKKEDGHS) show a composition bias toward basic and acidic residues. The segment covering 353-373 (ESSTCGEEPSISGTPEKSSCT) has biased composition (polar residues). Phosphoserine is present on residues Ser-394, Ser-395, and Ser-397. The 168-residue stretch at 433–600 (DSKFALTFFA…WSLLSFLKLK (168 aa)) folds into the Helicase ATP-binding domain. Residues 551–554 (DEGH) carry the DEGH box motif. The residue at position 730 (Thr-730) is a Phosphothreonine. The RING-type zinc-finger motif lies at 754-795 (CAICLDSLTFPVITHCAHVFCKPCICQVIHSEQPHAKCPLCR). The Helicase C-terminal domain occupies 831–990 (ALMHALIELR…TKKTDANDMK (160 aa)). Positions 919–1003 (SRVFLMDPAW…INEIRTLIDL (85 aa)) are interaction with SP1 and SP3.

This sequence belongs to the SNF2/RAD54 helicase family. RAD16 subfamily. In terms of assembly, interacts with SP1 and SP3 independently of DNA; the interaction with these transcriptional factors may be required for basal transcription of target genes. Interacts with EGR1; the interaction requires prior binding to DNA and represses c-Rel via a DNA looping mechanism. Interacts with GATA4. Interacts with PCNA; the interaction promotes polyubiquitination of PCNA through association with the UBE2B-RAD18 and UBE2V2-UBE2N ubiquitin ligase complexes. Interacts with RAD18, SHPRH, UBE2V2 and UBE2N. Expressed in brain, heart, kidney, liver, lung, pancreas, placenta and skeletal muscle.

It is found in the cytoplasm. The protein localises to the nucleus. The protein resides in the nucleolus. Its subcellular location is the nucleoplasm. It catalyses the reaction S-ubiquitinyl-[E2 ubiquitin-conjugating enzyme]-L-cysteine + [acceptor protein]-L-lysine = [E2 ubiquitin-conjugating enzyme]-L-cysteine + N(6)-ubiquitinyl-[acceptor protein]-L-lysine.. It functions in the pathway protein modification; protein ubiquitination. Functionally, has both helicase and E3 ubiquitin ligase activities. Possesses intrinsic ATP-dependent nucleosome-remodeling activity. This activity may be required for transcriptional activation or repression of specific target promoters. These may include the SERPINE1, to which this protein can bind directly. Plays a role in error-free postreplication repair (PRR) of damaged DNA and maintains genomic stability through acting as a ubiquitin ligase for 'Lys-63'-linked polyubiquitination of chromatin-bound PCNA. The chain is Helicase-like transcription factor (Hltf) from Mus musculus (Mouse).